The sequence spans 439 residues: Hemagglutinin-esterase (439 aa).

The signal sequence occupies residues 1 to 22 (MGCMCIAMAPRTLLLLIGCQLV). The interval 12–132 (TLLLLIGCQL…DNKRWMGNKA (121 aa)) is esterase domain 1. Residues 23-407 (FGFNEPLNIV…PVCIYDPLPV (385 aa)) are Virion surface-facing. The active-site Nucleophile is Ser45. Residues Cys49 and Cys70 are joined by a disulfide bond. N-linked (GlcNAc...) asparagine; by host glycans are attached at residues Asn94, Asn152, Asn196, Asn246, Asn309, and Asn316. Residues Cys118 and Cys167 are joined by a disulfide bond. The interval 133 to 281 (RFYARVYEKM…GNYKAVSLEY (149 aa)) is receptor binding. 2 disulfides stabilise this stretch: Cys202–Cys291 and Cys210–Cys264. The esterase domain 2 stretch occupies residues 282–395 (LLSLPSKAIC…HCPTAANIGY (114 aa)). Cys322 and Cys327 are disulfide-bonded. Asn331 carries an N-linked (GlcNAc...) asparagine; by host glycan. Active-site charge relay system residues include Asp342 and His345. N-linked (GlcNAc...) asparagine; by host glycosylation is found at Asn360 and Asn374. Cys363 and Cys387 are oxidised to a cystine. The helical transmembrane segment at 408 to 428 (ILLGVLLGIAVLIIVFLMFYF) threads the bilayer. Over 429 to 439 (MTDSGVRLHEA) the chain is Intravirion.

The protein belongs to the influenza type C/coronaviruses hemagglutinin-esterase family. Homodimer; disulfide-linked. Forms a complex with the M protein in the pre-Golgi. Associates then with S-M complex to form a ternary complex S-M-HE. In terms of processing, N-glycosylated in the host RER.

Its subcellular location is the virion membrane. It localises to the host cell membrane. The catalysed reaction is N-acetyl-9-O-acetylneuraminate + H2O = N-acetylneuraminate + acetate + H(+). The enzyme catalyses N-acetyl-4-O-acetylneuraminate + H2O = N-acetylneuraminate + acetate + H(+). Its function is as follows. Structural protein that makes short spikes at the surface of the virus. Contains receptor binding and receptor-destroying activities. Mediates de-O-acetylation of N-acetyl-4-O-acetylneuraminic acid, which is probably the receptor determinant recognized by the virus on the surface of erythrocytes and susceptible cells. This receptor-destroying activity is important for virus release as it probably helps preventing self-aggregation and ensures the efficient spread of the progeny virus from cell to cell. May serve as a secondary viral attachment protein for initiating infection, the spike protein being the major one. May become a target for both the humoral and the cellular branches of the immune system. This chain is Hemagglutinin-esterase, found in Murine coronavirus (strain S) (MHV-S).